Here is a 155-residue protein sequence, read N- to C-terminus: Endoribonuclease YbeY (155 aa).

Zn(2+)-binding residues include His114, His118, and His124.

It belongs to the endoribonuclease YbeY family. The cofactor is Zn(2+).

Its subcellular location is the cytoplasm. Its function is as follows. Single strand-specific metallo-endoribonuclease involved in late-stage 70S ribosome quality control and in maturation of the 3' terminus of the 16S rRNA. The chain is Endoribonuclease YbeY from Erwinia tasmaniensis (strain DSM 17950 / CFBP 7177 / CIP 109463 / NCPPB 4357 / Et1/99).